We begin with the raw amino-acid sequence, 160 residues long: Glyoxalase domain-containing protein 5 (160 aa).

One can recognise a VOC domain in the interval 33-153 (RLDHLVLTVR…DHNLIEVSNY (121 aa)).

The protein belongs to the glyoxalase I family.

The chain is Glyoxalase domain-containing protein 5 (glod5) from Xenopus laevis (African clawed frog).